A 299-amino-acid polypeptide reads, in one-letter code: Probable adenylate kinase 7, mitochondrial (299 aa).

The N-terminal 25 residues, 1 to 25 (MAGVLRLAGAARSPLARALAPAARR), are a transit peptide targeting the mitochondrion. 80–85 (GPQKHA) lines the ATP pocket. Residues 100 to 129 (SMGTLVRQELSPASSLYKKIANSVNEGKLV) are NMP. Residues arginine 106, 127 to 129 (KLV), 157 to 160 (GIPR), and glutamine 164 each bind AMP. ATP is bound by residues arginine 190 and 203–204 (LF). Residues 193 to 237 (GGDICPHCGQLFDFSKTASSDRNPSLGSCTWPSQVQHAAVLGLED) are LID.

It belongs to the adenylate kinase family.

Its subcellular location is the mitochondrion. It carries out the reaction AMP + ATP = 2 ADP. Its function is as follows. Catalyzes the reversible transfer of the terminal phosphate group between ATP and AMP. Plays an important role in cellular energy homeostasis and in adenine nucleotide metabolism. The sequence is that of Probable adenylate kinase 7, mitochondrial from Oryza sativa subsp. japonica (Rice).